The chain runs to 375 residues: CCA-adding enzyme (375 aa).

ATP contacts are provided by Gly8 and Arg11. CTP contacts are provided by Gly8 and Arg11. The Mg(2+) site is built by Asp21 and Asp23. ATP contacts are provided by Arg91, Arg137, and Arg140. The CTP site is built by Arg91, Arg137, and Arg140.

The protein belongs to the tRNA nucleotidyltransferase/poly(A) polymerase family. Bacterial CCA-adding enzyme type 2 subfamily. Mg(2+) is required as a cofactor.

The catalysed reaction is a tRNA precursor + 2 CTP + ATP = a tRNA with a 3' CCA end + 3 diphosphate. It catalyses the reaction a tRNA with a 3' CCA end + 2 CTP + ATP = a tRNA with a 3' CCACCA end + 3 diphosphate. In terms of biological role, catalyzes the addition and repair of the essential 3'-terminal CCA sequence in tRNAs without using a nucleic acid template. Adds these three nucleotides in the order of C, C, and A to the tRNA nucleotide-73, using CTP and ATP as substrates and producing inorganic pyrophosphate. tRNA 3'-terminal CCA addition is required both for tRNA processing and repair. Also involved in tRNA surveillance by mediating tandem CCA addition to generate a CCACCA at the 3' terminus of unstable tRNAs. While stable tRNAs receive only 3'-terminal CCA, unstable tRNAs are marked with CCACCA and rapidly degraded. The sequence is that of CCA-adding enzyme from Pseudomonas entomophila (strain L48).